Reading from the N-terminus, the 279-residue chain is Uroplakin-3b (279 aa).

The first 26 residues, 1 to 26 (MGLPSRQPRLWLLLLVVLGWPQPCLT), serve as a signal peptide directing secretion. The Lumenal portion of the chain corresponds to 27-200 (LDLIPYTPRI…DTWPGRRSGD (174 aa)). A glycan (N-linked (GlcNAc...) asparagine) is linked at asparagine 77. Residues 201-221 (MIIITSILSSLAGLLLLAFLA) form a helical membrane-spanning segment. Residues 222 to 279 (ASSVRFSSLWWPEEAPEQLRIGSFMGKRYMTHHIPPSEAATLPVGCEPGLERFPSLSP) lie on the Cytoplasmic side of the membrane.

The protein belongs to the uroplakin-3 family. Heterodimer with uroplakin-1B (UPK1B). In terms of tissue distribution, expression is urothelium-specific.

Its subcellular location is the cell membrane. Its function is as follows. Component of the asymmetric unit membrane (AUM); a highly specialized biomembrane elaborated by terminally differentiated urothelial cells. May play an important role in AUM-cytoskeleton interaction in terminally differentiated urothelial cells. It also contributes to the formation of urothelial glycocalyx which may play an important role in preventing bacterial adherence. The protein is Uroplakin-3b (UPK3B) of Bos taurus (Bovine).